We begin with the raw amino-acid sequence, 569 residues long: MDKSSGLDFINQMFPVEASLSCVESFMQKICDEIRRVDATILAVVSQQGNSGTRAKENLNDAICAAEELSHKIQEIKSKAEQTEAMVQDICSDIKKLDFAKKNITTAVTALSRLTMLVSAVQQLQVMTSKRQYKEAATQLEAINELCNHFKAYMDLPKIMELREKLKNIKQILKFHVFSDFSSLGTGTETEELFLLKKLSDSCLVVDALEPSVREELINNFCSRELTSYEQIYVGAELKTLDEIELIYNQLSCLIRKNQGKWTIFPASWHVPYRLCIQLSRKTRVQVESILVNLKEKSDVEKLLLELKRTLEFERELEMKFGGGGSIGDDIIGGGGNNSQKFNFRGMISSCFEPHLTIYIEKEEMELMQLLEKVVQEETWDIEEELGCHSENSVYLMLLDAHDMKMILLKVPSLARQPEASALLVKTATASYVKLVNHQMKRAEAVLKVIASPIVTVIDTYRALFPEETPMEFQRILVLKGLTKAEQQSILDDFNNHSSRITQLSVAAKTPEAHALPLALTNVAPAVRFKANSEEVLTRAASAATTSFMKLYALTGAAKDRPFRKLFNP.

3 coiled-coil regions span residues 53–90, 125–145, and 295–316; these read TRAK…VQDI, QVMT…AINE, and KEKS…FERE.

It belongs to the VPS53 family. In terms of assembly, component of the Golgi-associated retrograde protein (GARP) complex.

Its subcellular location is the cytoplasm. It localises to the golgi apparatus. The protein localises to the trans-Golgi network membrane. It is found in the endosome membrane. Involved in retrograde transport from early and late endosomes to late Golgi, leading to the membrane fusion between late Golgi and endosomal vesicles. This chain is Vacuolar protein sorting-associated protein 53 B, found in Arabidopsis thaliana (Mouse-ear cress).